The primary structure comprises 273 residues: Thiazole synthase (273 aa).

Lysine 110 acts as the Schiff-base intermediate with DXP in catalysis. 1-deoxy-D-xylulose 5-phosphate-binding positions include glycine 171, 198–199, and 220–221; these read AG and NS.

The protein belongs to the ThiG family. Homotetramer. Forms heterodimers with either ThiH or ThiS.

It is found in the cytoplasm. It catalyses the reaction [ThiS sulfur-carrier protein]-C-terminal-Gly-aminoethanethioate + 2-iminoacetate + 1-deoxy-D-xylulose 5-phosphate = [ThiS sulfur-carrier protein]-C-terminal Gly-Gly + 2-[(2R,5Z)-2-carboxy-4-methylthiazol-5(2H)-ylidene]ethyl phosphate + 2 H2O + H(+). Its pathway is cofactor biosynthesis; thiamine diphosphate biosynthesis. In terms of biological role, catalyzes the rearrangement of 1-deoxy-D-xylulose 5-phosphate (DXP) to produce the thiazole phosphate moiety of thiamine. Sulfur is provided by the thiocarboxylate moiety of the carrier protein ThiS. In vitro, sulfur can be provided by H(2)S. The polypeptide is Thiazole synthase (Hydrogenovibrio crunogenus (strain DSM 25203 / XCL-2) (Thiomicrospira crunogena)).